Here is a 59-residue protein sequence, read N- to C-terminus: Large ribosomal subunit protein uL30 (59 aa).

It belongs to the universal ribosomal protein uL30 family. In terms of assembly, part of the 50S ribosomal subunit.

This Clostridium kluyveri (strain ATCC 8527 / DSM 555 / NBRC 12016 / NCIMB 10680 / K1) protein is Large ribosomal subunit protein uL30.